We begin with the raw amino-acid sequence, 688 residues long: Glycine--tRNA ligase beta subunit (688 aa).

This sequence belongs to the class-II aminoacyl-tRNA synthetase family. Tetramer of two alpha and two beta subunits.

The protein resides in the cytoplasm. It catalyses the reaction tRNA(Gly) + glycine + ATP = glycyl-tRNA(Gly) + AMP + diphosphate. This is Glycine--tRNA ligase beta subunit from Haemophilus influenzae (strain PittGG).